The primary structure comprises 193 residues: Probable gluconokinase (193 aa).

Position 21-28 (21-28 (GPAGSGKT)) interacts with ATP.

Belongs to the gluconokinase GntK/GntV family.

The catalysed reaction is D-gluconate + ATP = 6-phospho-D-gluconate + ADP + H(+). Its pathway is carbohydrate acid metabolism; D-gluconate degradation. This chain is Probable gluconokinase, found in Schizosaccharomyces pombe (strain 972 / ATCC 24843) (Fission yeast).